The sequence spans 383 residues: Neuropeptide Y receptor type 1 (383 aa).

Residues 1–44 lie on the Extracellular side of the membrane; the sequence is MNSTLSSQVENHSIYYNFSEKNSQFLAFENDDCHLPLAMIFTLA. 3 N-linked (GlcNAc...) asparagine glycosylation sites follow: Asn-2, Asn-11, and Asn-17. The chain crosses the membrane as a helical span at residues 45–65; that stretch reads LAYGAVIILGVSGNLALIIII. At 66-76 the chain is on the cytoplasmic side; the sequence is LKQKEMRNVTN. Residues 77 to 97 traverse the membrane as a helical segment; it reads ILIVNLSFSDLLVAIMCLPFT. The Extracellular segment spans residues 98 to 116; sequence FVYTLMDHWVFGEVMCKLN. A disulfide bridge connects residues Cys-113 and Cys-198. The helical transmembrane segment at 117–137 threads the bilayer; that stretch reads PFVQCVSITVSIFSLVLIAVE. Topologically, residues 138–154 are cytoplasmic; it reads RHQLIINPRGWRPSNRH. Residues 155–175 traverse the membrane as a helical segment; that stretch reads AYVGIAVIWVLAVASSLPFLI. At 176 to 211 the chain is on the extracellular side; it reads YQVLTDEPFQNVTLDAFKDKYVCFDKFLSDSHRLSY. Residues 212–232 form a helical membrane-spanning segment; sequence TTLLLVLQYFGPLCFIFICYF. Over 233 to 260 the chain is Cytoplasmic; sequence KIYIRLKRRNNMMDKMRDNKYRSSETKR. The helical transmembrane segment at 261-281 threads the bilayer; it reads INVMLLSIVVAFAVCWLPLTI. Residues 282-299 lie on the Extracellular side of the membrane; that stretch reads FNTVFDWNHQIIATCNHN. A helical membrane pass occupies residues 300-320; sequence LLFLLCHLTAMISTCINPIFY. Residues 321–383 are Cytoplasmic-facing; sequence GFLNKNFQRD…KIHSDDNEKI (63 aa). Residue Cys-338 is the site of S-palmitoyl cysteine attachment. Position 368 is a phosphoserine (Ser-368).

Belongs to the G-protein coupled receptor 1 family.

It localises to the cell membrane. In terms of biological role, receptor for neuropeptide Y and peptide YY. The chain is Neuropeptide Y receptor type 1 (NPY1R) from Sus scrofa (Pig).